Reading from the N-terminus, the 905-residue chain is Chitin synthase 3B (905 aa).

The segment covering 1 to 10 has biased composition (basic and acidic residues); the sequence is MAYNGRDQEY. The interval 1 to 136 is disordered; that stretch reads MAYNGRDQEY…GGGGGLGRSK (136 aa). Residues 81–93 are compositionally biased toward gly residues; the sequence is GPTGYGDTGGSFG. The N-linked (GlcNAc...) asparagine glycan is linked to N536. Residues 562–584 traverse the membrane as a helical segment; it reads MFFLHIQLIYTTLNTMFAWFSLG. Residue N601 is glycosylated (N-linked (GlcNAc...) asparagine). 6 helical membrane passes run 618 to 638, 653 to 673, 705 to 725, 733 to 753, 832 to 852, and 873 to 893; these read IVNALLQYLYLAFVMLQFILA, SFMVFGLIQGYILVLSAYLVV, VILVALITIYGLNFIASFMYL, SFPYYLVLMSTYINILMVYAF, TGLVVCWLFGNILLIVCITST, and FLLYATAVLSLVRFFGFLWFL.

This sequence belongs to the chitin synthase family. Class III subfamily.

It is found in the cell membrane. The enzyme catalyses [(1-&gt;4)-N-acetyl-beta-D-glucosaminyl](n) + UDP-N-acetyl-alpha-D-glucosamine = [(1-&gt;4)-N-acetyl-beta-D-glucosaminyl](n+1) + UDP + H(+). Polymerizes chitin, a structural polymer of the cell wall and septum, by transferring the sugar moiety of UDP-GlcNAc to the non-reducing end of the growing chitin polymer. Plays essential functions in fungal survival and host infection. In Gibberella zeae (strain ATCC MYA-4620 / CBS 123657 / FGSC 9075 / NRRL 31084 / PH-1) (Wheat head blight fungus), this protein is Chitin synthase 3B.